A 414-amino-acid chain; its full sequence is Nuclear pore complex-interacting protein family member B7 (414 aa).

Residues Met1–His18 form the signal peptide. The N-linked (GlcNAc...) asparagine glycan is linked to Asn111. Disordered stretches follow at residues Arg242–Ser262 and Ser335–Arg402. A compositionally biased stretch (polar residues) spans Gln252 to Ser262. Positions Glu356 to Glu384 are enriched in basic and acidic residues. A compositionally biased stretch (basic residues) spans Lys390 to Arg402.

Belongs to the NPIP family.

The protein localises to the secreted. The sequence is that of Nuclear pore complex-interacting protein family member B7 (NPIPB7) from Homo sapiens (Human).